Reading from the N-terminus, the 224-residue chain is Ribonuclease 3 (224 aa).

The RNase III domain maps to 5 to 127 (LERLCRRLNY…ILAAIYLDGG (123 aa)). E40 lines the Mg(2+) pocket. D44 is a catalytic residue. Residues D113 and E116 each contribute to the Mg(2+) site. The active site involves E116. Positions 154–224 (DAKTQLQEFL…AKAMLEQLQG (71 aa)) constitute a DRBM domain.

This sequence belongs to the ribonuclease III family. As to quaternary structure, homodimer. Requires Mg(2+) as cofactor.

It is found in the cytoplasm. It carries out the reaction Endonucleolytic cleavage to 5'-phosphomonoester.. Digests double-stranded RNA. Involved in the processing of primary rRNA transcript to yield the immediate precursors to the large and small rRNAs (23S and 16S). Processes some mRNAs, and tRNAs when they are encoded in the rRNA operon. Processes pre-crRNA and tracrRNA of type II CRISPR loci if present in the organism. The chain is Ribonuclease 3 from Legionella pneumophila (strain Paris).